A 390-amino-acid chain; its full sequence is Succinate--CoA ligase [ADP-forming] subunit beta (390 aa).

An ATP-grasp domain is found at K9–K244. ATP contacts are provided by K46, E99, L102, and E107. Mg(2+)-binding residues include N199 and D213. Substrate is bound by residues N264 and G321 to V323.

The protein belongs to the succinate/malate CoA ligase beta subunit family. As to quaternary structure, heterotetramer of two alpha and two beta subunits. Mg(2+) serves as cofactor.

The catalysed reaction is succinate + ATP + CoA = succinyl-CoA + ADP + phosphate. It catalyses the reaction GTP + succinate + CoA = succinyl-CoA + GDP + phosphate. It participates in carbohydrate metabolism; tricarboxylic acid cycle; succinate from succinyl-CoA (ligase route): step 1/1. In terms of biological role, succinyl-CoA synthetase functions in the citric acid cycle (TCA), coupling the hydrolysis of succinyl-CoA to the synthesis of either ATP or GTP and thus represents the only step of substrate-level phosphorylation in the TCA. The beta subunit provides nucleotide specificity of the enzyme and binds the substrate succinate, while the binding sites for coenzyme A and phosphate are found in the alpha subunit. This is Succinate--CoA ligase [ADP-forming] subunit beta from Hydrogenovibrio crunogenus (strain DSM 25203 / XCL-2) (Thiomicrospira crunogena).